Here is a 425-residue protein sequence, read N- to C-terminus: Isocitrate dehydrogenase [NADP] (425 aa).

T114 lines the NADP(+) pocket. 5 residues coordinate D-threo-isocitrate: S123, N125, R129, R139, and R162. Residue D316 coordinates Mg(2+). NADP(+) contacts are provided by residues 348-354 (HGTAPKY), N361, Y400, and R404.

It belongs to the isocitrate and isopropylmalate dehydrogenases family. Homodimer. Mg(2+) serves as cofactor. Requires Mn(2+) as cofactor.

The enzyme catalyses D-threo-isocitrate + NADP(+) = 2-oxoglutarate + CO2 + NADPH. Catalyzes the oxidative decarboxylation of isocitrate to 2-oxoglutarate and carbon dioxide with the concomitant reduction of NADP(+). The chain is Isocitrate dehydrogenase [NADP] (icd) from Helicobacter pylori (strain ATCC 700392 / 26695) (Campylobacter pylori).